Here is a 281-residue protein sequence, read N- to C-terminus: Probable endonuclease 4 (281 aa).

Zn(2+) contacts are provided by His67, His107, Glu142, Asp176, His179, His211, Asp224, His226, and Glu256.

Belongs to the AP endonuclease 2 family. Requires Zn(2+) as cofactor.

The catalysed reaction is Endonucleolytic cleavage to 5'-phosphooligonucleotide end-products.. Functionally, endonuclease IV plays a role in DNA repair. It cleaves phosphodiester bonds at apurinic or apyrimidinic (AP) sites, generating a 3'-hydroxyl group and a 5'-terminal sugar phosphate. The polypeptide is Probable endonuclease 4 (Alkaliphilus oremlandii (strain OhILAs) (Clostridium oremlandii (strain OhILAs))).